The following is a 645-amino-acid chain: Cyclin-D-binding Myb-like transcription factor 1 (645 aa).

2 disordered regions span residues 34 to 71 (QNDG…STEY) and 95 to 119 (RDEE…KKGE). 2 stretches are compositionally biased toward acidic residues: residues 36 to 46 (DGEDLGSDETT) and 95 to 105 (RDEELESDDLS). Positions 219-257 (GKYTDEEINKLKELRQKHGNDWATIGSALGRSASSVKDR) constitute a Myb-like 1 domain. Positions 262–327 (KDTCNTGKWT…KWLNYLNWKQ (66 aa)) constitute an HTH myb-type domain. The H-T-H motif DNA-binding region spans 300–323 (WASVAELVGTRSEKQCRSKWLNYL). The Myb-like 2 domain occupies 333-382 (WTKEDDINLVRRIAELEVEDENEINWDILASGWSSVRSPQWLRSKWWTIK). The interval 568-645 (VKEEPSENQT…ILENQEEGSN (78 aa)) is disordered. Positions 587–597 (EQSKQGEKTLD) are enriched in basic and acidic residues. The segment covering 615–625 (IPTNEDISSDS) has biased composition (polar residues).

Belongs to the DMTF1 family.

Its subcellular location is the nucleus. Transcriptional activator which activates the CDKN2A/ARF locus in response to Ras-Raf signaling, thereby promoting p53/TP53-dependent growth arrest. Binds to the consensus sequence 5'-CCCG[GT]ATGT-3'. The sequence is that of Cyclin-D-binding Myb-like transcription factor 1 (dmtf1) from Danio rerio (Zebrafish).